A 463-amino-acid chain; its full sequence is MENTLIKSIYRDTPAYLNQELQISGWVRTLRVSKSFGFIEINDGSFFKGIQVVFEEDLNNFEEIAKVATGSSLIIKGLLVESPGAKQPFELKAQSIMIEGACSGDYPLQKKRHSFEYLRTIAHLRPRTNTFAAVFRVRSLVAYAIHKFFQDKGFVYIHTPIITGSDAEGAGEMFRVTTLDLDALPRTEEGRIDYAKDFFGKETNLTVSGQLNAETYCMAFRNVYTFGPTFRAENSNTARHAAEFWMIEPEIAFADLQDDMELAEEMMKYLISYVLEHAPEEMAFFNEFVDKTLFDRLDNIVNSDFGRLTYTEAIEILQKEKERFEFPVEWGADLQTEHERFLTEQIFKKPVFVVDYPKDIKAFYMRLNDDQKTVAAMDLLVPGVGEIIGGSQREERLDYLEKRMAELGLHKEDYSWYLDLRKYGGTRHAGYGLGFERVIMYLTGISNIRDVVAFPRTVKNADF.

The protein belongs to the class-II aminoacyl-tRNA synthetase family. As to quaternary structure, homodimer.

The protein localises to the cytoplasm. The enzyme catalyses tRNA(Asn) + L-asparagine + ATP = L-asparaginyl-tRNA(Asn) + AMP + diphosphate + H(+). In Desulfitobacterium hafniense (strain Y51), this protein is Asparagine--tRNA ligase.